Consider the following 259-residue polypeptide: Glutamate racemase (259 aa).

Substrate-binding positions include 12 to 13 and 44 to 45; these read DS and YG. The Proton donor/acceptor role is filled by Cys-75. A substrate-binding site is contributed by 76–77; that stretch reads NT. Cys-186 (proton donor/acceptor) is an active-site residue. Residue 187–188 participates in substrate binding; that stretch reads TH.

Belongs to the aspartate/glutamate racemases family.

The catalysed reaction is L-glutamate = D-glutamate. It functions in the pathway cell wall biogenesis; peptidoglycan biosynthesis. Provides the (R)-glutamate required for cell wall biosynthesis. This Clostridium novyi (strain NT) protein is Glutamate racemase.